A 546-amino-acid chain; its full sequence is Chaperonin GroEL (546 aa).

ATP is bound by residues 29–32 (TLGP), K50, 86–90 (DGTTT), G414, and D495. The segment at 526 to 546 (AKEGAPAGGGMPDMGGMGGMM) is disordered. The segment covering 531–546 (PAGGGMPDMGGMGGMM) has biased composition (gly residues).

This sequence belongs to the chaperonin (HSP60) family. Forms a cylinder of 14 subunits composed of two heptameric rings stacked back-to-back. Interacts with the co-chaperonin GroES.

It localises to the cytoplasm. The enzyme catalyses ATP + H2O + a folded polypeptide = ADP + phosphate + an unfolded polypeptide.. Together with its co-chaperonin GroES, plays an essential role in assisting protein folding. The GroEL-GroES system forms a nano-cage that allows encapsulation of the non-native substrate proteins and provides a physical environment optimized to promote and accelerate protein folding. In Jannaschia sp. (strain CCS1), this protein is Chaperonin GroEL.